A 374-amino-acid polypeptide reads, in one-letter code: Protein-glutamate methylesterase/protein-glutamine glutaminase (374 aa).

The Response regulatory domain occupies Lys4 to Met121. A 4-aspartylphosphate modification is found at Asp55. Residues Pro144–Lys186 are disordered. Over residues Pro154–Pro183 the composition is skewed to low complexity. The 192-residue stretch at Pro183–Val374 folds into the CheB-type methylesterase domain. Residues Ser198, His225, and Asp318 contribute to the active site.

It belongs to the CheB family. Phosphorylated by CheA. Phosphorylation of the N-terminal regulatory domain activates the methylesterase activity.

The protein resides in the cytoplasm. It carries out the reaction [protein]-L-glutamate 5-O-methyl ester + H2O = L-glutamyl-[protein] + methanol + H(+). The enzyme catalyses L-glutaminyl-[protein] + H2O = L-glutamyl-[protein] + NH4(+). Its function is as follows. Involved in chemotaxis. Part of a chemotaxis signal transduction system that modulates chemotaxis in response to various stimuli. Catalyzes the demethylation of specific methylglutamate residues introduced into the chemoreceptors (methyl-accepting chemotaxis proteins or MCP) by CheR. Also mediates the irreversible deamidation of specific glutamine residues to glutamic acid. The polypeptide is Protein-glutamate methylesterase/protein-glutamine glutaminase (Pseudomonas putida (Arthrobacter siderocapsulatus)).